A 118-amino-acid polypeptide reads, in one-letter code: Ribonuclease P protein component (118 aa).

Belongs to the RnpA family. Consists of a catalytic RNA component (M1 or rnpB) and a protein subunit.

The enzyme catalyses Endonucleolytic cleavage of RNA, removing 5'-extranucleotides from tRNA precursor.. Functionally, RNaseP catalyzes the removal of the 5'-leader sequence from pre-tRNA to produce the mature 5'-terminus. It can also cleave other RNA substrates such as 4.5S RNA. The protein component plays an auxiliary but essential role in vivo by binding to the 5'-leader sequence and broadening the substrate specificity of the ribozyme. This chain is Ribonuclease P protein component, found in Vibrio vulnificus (strain CMCP6).